The sequence spans 385 residues: Transcription termination factor 2, mitochondrial (385 aa).

Residues 1 to 35 (MLWKLLLRSQSCRLCSFRKMRSPPKYRPFLACFTY) constitute a mitochondrion transit peptide.

It belongs to the mTERF family. As to quaternary structure, monomer. Expressed in skeletal muscle, heart, liver and pancreas.

Its subcellular location is the mitochondrion. It is found in the mitochondrion matrix. It localises to the mitochondrion nucleoid. In terms of biological role, binds mitochondrial DNA and plays a role in the regulation of transcription of mitochondrial mRNA and rRNA species. The polypeptide is Transcription termination factor 2, mitochondrial (MTERF2) (Homo sapiens (Human)).